The primary structure comprises 278 residues: Rhomboid protease GlpG (278 aa).

The next 6 helical transmembrane spans lie at 94–114 (AGPLTLSVMVLCIAIYILMLI), 143–163 (AFLHFSLLHILFNLMWWWYLG), 175–195 (LLVLTIVSAVFSGWGQSLFSG), 196–216 (ANFGGLSGVVYALMGYVWLTG), 224–241 (ISLPRGLMAFSVLWLIAG), and 245–267 (ILGLSIANAAHVSGLIIGLLMAF). Serine 202 acts as the Nucleophile in catalysis. Histidine 255 is a catalytic residue.

The protein belongs to the peptidase S54 family.

The protein resides in the cell inner membrane. It catalyses the reaction Cleaves type-1 transmembrane domains using a catalytic dyad composed of serine and histidine that are contributed by different transmembrane domains.. Functionally, rhomboid-type serine protease that catalyzes intramembrane proteolysis. This is Rhomboid protease GlpG from Yersinia pestis bv. Antiqua (strain Antiqua).